Consider the following 320-residue polypeptide: Polyketide transferase FFUJ_12241 (320 aa).

The tract at residues 58-298 (RDITCLAWDP…ILKGKGHLDW (241 aa)) is abhydrolase domain.

It belongs to the polyketide transferase af380 family.

In terms of biological role, polyketide transferase; part of the gene cluster that mediates the biosynthesis of fujikurins A-D, secondary metabolites playing a role during rice infection. The polyketide synthase PKS19 acts with the trans-enoyl reductase FFUJ_12240 and the polyketide transferase FFUJ_12241 to produce fujikurins, however, the biosynthesis pathway has not been identified yet. This Gibberella fujikuroi (strain CBS 195.34 / IMI 58289 / NRRL A-6831) (Bakanae and foot rot disease fungus) protein is Polyketide transferase FFUJ_12241.